Reading from the N-terminus, the 291-residue chain is Bifunctional protein FolD (291 aa).

Residues 167–169 (GRS), Ser-192, and Ile-233 each bind NADP(+).

Belongs to the tetrahydrofolate dehydrogenase/cyclohydrolase family. Homodimer.

It catalyses the reaction (6R)-5,10-methylene-5,6,7,8-tetrahydrofolate + NADP(+) = (6R)-5,10-methenyltetrahydrofolate + NADPH. It carries out the reaction (6R)-5,10-methenyltetrahydrofolate + H2O = (6R)-10-formyltetrahydrofolate + H(+). The protein operates within one-carbon metabolism; tetrahydrofolate interconversion. Its function is as follows. Catalyzes the oxidation of 5,10-methylenetetrahydrofolate to 5,10-methenyltetrahydrofolate and then the hydrolysis of 5,10-methenyltetrahydrofolate to 10-formyltetrahydrofolate. The sequence is that of Bifunctional protein FolD from Dichelobacter nodosus (strain VCS1703A).